The sequence spans 442 residues: Metacaspase-5 (442 aa).

A signal peptide spans 1-18; the sequence is MDLLLGVLSSGILQNALP. The important for catalytic activity stretch occupies residues 19-62; it reads FVAGVGRVKRPKRVKLEEAFREAHLCRPVIPYRAPTPYTGGRVK. 2 N-linked (GlcNAc...) asparagine glycosylation sites follow: N69 and N112. The active site involves H146. Ca(2+)-binding residues include D161, D177, and D178. C201 is a catalytic residue. A Ca(2+)-binding site is contributed by D208. N-linked (GlcNAc...) asparagine glycosylation is found at N234, N257, N282, and N331. The segment at 336-442 is negatively regulates catalytic activity; that stretch reads HYVPQQYLQP…QYLSGVGKPL (107 aa). Positions 348–371 are enriched in pro residues; that stretch reads PPQPYYPPPQPQQPYYPPPQPQQP. Positions 348 to 442 are disordered; sequence PPQPYYPPPQ…QYLSGVGKPL (95 aa). Over residues 372-382 the composition is skewed to low complexity; that stretch reads YYPSSQLPTQY. Over residues 422 to 434 the composition is skewed to polar residues; sequence PSDQSTYYSSAQY.

Belongs to the peptidase C14B family. In epimastigotes, the unprocessed enzyme appears to be the main form. Auto-processing is dispensable for catalytic activity towards small oligopeptide substrates.

It localises to the recycling endosome. Activated by Ca(2+). Cysteine protease that cleaves specifically after arginine or lysine residues. May play a role in apoptosis. The chain is Metacaspase-5 from Trypanosoma cruzi (strain CL Brener).